A 284-amino-acid chain; its full sequence is NAD kinase (284 aa).

Catalysis depends on Asp70, which acts as the Proton acceptor. Residues 70–71 (DG), 139–140 (NE), Lys167, Asp169, Leu177, 180–185 (TAYNLS), and Gln236 each bind NAD(+).

The protein belongs to the NAD kinase family. A divalent metal cation is required as a cofactor.

The protein resides in the cytoplasm. It catalyses the reaction NAD(+) + ATP = ADP + NADP(+) + H(+). Functionally, involved in the regulation of the intracellular balance of NAD and NADP, and is a key enzyme in the biosynthesis of NADP. Catalyzes specifically the phosphorylation on 2'-hydroxyl of the adenosine moiety of NAD to yield NADP. The protein is NAD kinase of Helicobacter pylori (strain ATCC 700392 / 26695) (Campylobacter pylori).